The following is a 218-amino-acid chain: Uridine kinase (218 aa).

16-23 (GGSGSGKT) provides a ligand contact to ATP.

Belongs to the uridine kinase family.

The protein localises to the cytoplasm. It catalyses the reaction uridine + ATP = UMP + ADP + H(+). It carries out the reaction cytidine + ATP = CMP + ADP + H(+). It functions in the pathway pyrimidine metabolism; CTP biosynthesis via salvage pathway; CTP from cytidine: step 1/3. It participates in pyrimidine metabolism; UMP biosynthesis via salvage pathway; UMP from uridine: step 1/1. In Limosilactobacillus reuteri (strain DSM 20016) (Lactobacillus reuteri), this protein is Uridine kinase.